Reading from the N-terminus, the 151-residue chain is Small ribosomal subunit protein uS13 (151 aa).

The interval Arg-131 to Gln-151 is disordered. The segment covering Gln-133–Gln-151 has biased composition (basic residues).

The protein belongs to the universal ribosomal protein uS13 family. Part of the 30S ribosomal subunit. Forms a loose heterodimer with protein S19. Forms two bridges to the 50S subunit in the 70S ribosome.

In terms of biological role, located at the top of the head of the 30S subunit, it contacts several helices of the 16S rRNA. In the 70S ribosome it contacts the 23S rRNA (bridge B1a) and protein L5 of the 50S subunit (bridge B1b), connecting the 2 subunits; these bridges are implicated in subunit movement. This chain is Small ribosomal subunit protein uS13, found in Methanopyrus kandleri (strain AV19 / DSM 6324 / JCM 9639 / NBRC 100938).